Reading from the N-terminus, the 304-residue chain is ATP phosphoribosyltransferase (304 aa).

It belongs to the ATP phosphoribosyltransferase family. Long subfamily. The cofactor is Mg(2+).

The protein resides in the cytoplasm. It carries out the reaction 1-(5-phospho-beta-D-ribosyl)-ATP + diphosphate = 5-phospho-alpha-D-ribose 1-diphosphate + ATP. The protein operates within amino-acid biosynthesis; L-histidine biosynthesis; L-histidine from 5-phospho-alpha-D-ribose 1-diphosphate: step 1/9. Feedback inhibited by histidine. Catalyzes the condensation of ATP and 5-phosphoribose 1-diphosphate to form N'-(5'-phosphoribosyl)-ATP (PR-ATP). Has a crucial role in the pathway because the rate of histidine biosynthesis seems to be controlled primarily by regulation of HisG enzymatic activity. The protein is ATP phosphoribosyltransferase of Xylella fastidiosa (strain M12).